A 1016-amino-acid polypeptide reads, in one-letter code: Enhancer of polycomb-like protein 1 (1016 aa).

5 disordered regions span residues 1 to 50 (MAIH…NDLE), 96 to 119 (LLGSQNEDGDKKKDDSDKKTDASV), 450 to 488 (KEEDEDKESSKIKRDKRSRFDSSREGSATSMPGSATIGT), 499 to 518 (GQVHHTQEASSSSQPYVKLP), and 842 to 1016 (ARMR…PNRK). Polar residues predominate over residues 35-50 (YKQSDLPTLNASNDLE). Basic and acidic residues-rich tracts occupy residues 103–116 (DGDKKKDDSDKKTD) and 457–473 (ESSKIKRDKRSRFDSSR). A compositionally biased stretch (polar residues) spans 475 to 488 (GSATSMPGSATIGT). The segment covering 842–883 (ARMRTLQQQQRNNKQQAAGQSSGSSSASLGSNTNSNSSISGQ) has biased composition (low complexity). A compositionally biased stretch (polar residues) spans 884 to 902 (ADQGQTNLTNSGITRQGGA). Residues 904 to 923 (VNGSQTSTTNNTRSSVSGGS) are compositionally biased toward low complexity. Positions 928 to 956 (LPTQSSQRSNTNSPLLASQPQGYSQQQKF) are enriched in polar residues. Over residues 960 to 971 (PPTSQSQSQSPT) the composition is skewed to low complexity. Polar residues predominate over residues 976–994 (QLQTSKMYNKHGSNITPSN).

It belongs to the enhancer of polycomb family. In terms of assembly, component of the NuA4 histone acetyltransferase complex.

Its subcellular location is the nucleus. Component of the NuA4 histone acetyltransferase complex which is involved in transcriptional activation of selected genes principally by acetylation of nucleosomal histone H4 and H2A. The NuA4 complex is also involved in DNA repair. Involved in gene silencing by neighboring heterochromatin, blockage of the silencing spreading along the chromosome, and required for cell cycle progression through G2/M. In Debaryomyces hansenii (strain ATCC 36239 / CBS 767 / BCRC 21394 / JCM 1990 / NBRC 0083 / IGC 2968) (Yeast), this protein is Enhancer of polycomb-like protein 1 (EPL1).